A 238-amino-acid polypeptide reads, in one-letter code: 2-C-methyl-D-erythritol 4-phosphate cytidylyltransferase (238 aa).

It belongs to the IspD/TarI cytidylyltransferase family. IspD subfamily.

It carries out the reaction 2-C-methyl-D-erythritol 4-phosphate + CTP + H(+) = 4-CDP-2-C-methyl-D-erythritol + diphosphate. The protein operates within isoprenoid biosynthesis; isopentenyl diphosphate biosynthesis via DXP pathway; isopentenyl diphosphate from 1-deoxy-D-xylulose 5-phosphate: step 2/6. In terms of biological role, catalyzes the formation of 4-diphosphocytidyl-2-C-methyl-D-erythritol from CTP and 2-C-methyl-D-erythritol 4-phosphate (MEP). This is 2-C-methyl-D-erythritol 4-phosphate cytidylyltransferase from Aliivibrio fischeri (strain MJ11) (Vibrio fischeri).